Consider the following 472-residue polypeptide: MRSSVLSLHPDRLLPADPGTRAIARRLYAQVATLPIISPHGHTDPAWFATNAPFANATELLLVPDHYVFRMLYSQGIDLDALGIPRADGTRAAVDPRAAWRVFAEHYTLLRGTPSALWLNHVFHDVFDLRIRLDAGTADHYYDHITAALQTPAFLPRALFERFNIEVIATTESPLDRLQHHAAIAASGWQGRVVTAYRPDPVVDPEHEQFAGALQQFGALTGEDVLSWDGYLRAHRQRRAFFAAHGATSTDHGHPSAATADLSPVQAQRLFDTVVRGEATPEQAELFRAQVLTEMAAMSLDDGLVMQLHPGCFRNHNRQLFEQYGRDKGADIPMRTDYVHALKPLLDRHGNDPRLRLIVFTLDETSYSRELAPLAGHYPSLLLGPAWWFHDAPEGMWRFREQTLASAGFYNTVGFNDDTRAFLSIPARHDVARRVDSAFLAKLVAEHRLEEDEATEVAIDLAYRLPKQAYNL.

Belongs to the metallo-dependent hydrolases superfamily. Uronate isomerase family.

It catalyses the reaction D-glucuronate = D-fructuronate. It carries out the reaction aldehydo-D-galacturonate = keto-D-tagaturonate. It participates in carbohydrate metabolism; pentose and glucuronate interconversion. This chain is Uronate isomerase, found in Xanthomonas euvesicatoria pv. vesicatoria (strain 85-10) (Xanthomonas campestris pv. vesicatoria).